The sequence spans 118 residues: Large ribosomal subunit protein bL20 (118 aa).

Belongs to the bacterial ribosomal protein bL20 family.

Its function is as follows. Binds directly to 23S ribosomal RNA and is necessary for the in vitro assembly process of the 50S ribosomal subunit. It is not involved in the protein synthesizing functions of that subunit. In Francisella tularensis subsp. tularensis (strain FSC 198), this protein is Large ribosomal subunit protein bL20.